We begin with the raw amino-acid sequence, 224 residues long: uncharacterized protein (224 aa).

It localises to the virion. This is an uncharacterized protein from Acanthamoeba polyphaga mimivirus (APMV).